The following is a 310-amino-acid chain: Thioredoxin reductase (310 aa).

Asn-34–Gln-41 contacts FAD. Cysteines 135 and 138 form a disulfide. Asp-281–Ala-290 is an FAD binding site.

The protein belongs to the class-II pyridine nucleotide-disulfide oxidoreductase family. Homodimer. FAD serves as cofactor.

The protein resides in the cytoplasm. It catalyses the reaction [thioredoxin]-dithiol + NADP(+) = [thioredoxin]-disulfide + NADPH + H(+). In Rickettsia felis (strain ATCC VR-1525 / URRWXCal2) (Rickettsia azadi), this protein is Thioredoxin reductase (trxB).